A 533-amino-acid polypeptide reads, in one-letter code: ASGQLHRPQPQEHTSTSAAAGTWRHTQASESRHRLPHCSAAPSHQDHSAMGFGPELWCPKGHSELLRLQDSELRLLELMKKWMSERAKSDREYAGMLHHMFSQLGSEEPPPALPLQEDRQSVCSTDQERSGVTALETIKNHISGIFSPRFSLPPPVPLIPEVQKPLCQQAWYHGAIPRSEVQELLKCSGDFLVRESQGKQEYVLSVLWDGQPRHFIIQAADNLYRLEGDGFPTIPLLIDHLLQSQQPITRKSGIVLTRAVLKDKWVLNHEDVLLGERIGRGNFGEVFSGRLRADNTPVAVKSCRETLPPELKAKFLQEARILKQYNHPNIVRLIGVCTQKQPIYIVMELVQGGDFLSFLRSKGPHLKMKELIKMMENAAAGMEYLESKHCIHRDLAARNCLVTEKNTLKISDFGMSRQEEDGVYASTGGMKQIPVKWTAPEALNYGRYSSESDVWSFGILLWEAFSLGAVPYANLSNQQTREAIEQGVRLEPPEQCPEDVYRLMQRCWEYDPRRRPSFGAVHQDLIAIRKRHR.

The interval 1 to 46 (ASGQLHRPQPQEHTSTSAAAGTWRHTQASESRHRLPHCSAAPSHQD) is disordered. Over residues 11-29 (QEHTSTSAAAGTWRHTQAS) the composition is skewed to polar residues. Residues 50 to 124 (MGFGPELWCP…LQEDRQSVCS (75 aa)) form the F-BAR; degenerate domain. The SH2 domain occupies 171-260 (WYHGAIPRSE…KSGIVLTRAV (90 aa)). Residues 272–525 (VLLGERIGRG…PSFGAVHQDL (254 aa)) form the Protein kinase domain. Residues 278–286 (IGRGNFGEV) and Lys-301 contribute to the ATP site. Asp-394 (proton acceptor) is an active-site residue. The residue at position 424 (Tyr-424) is a Phosphotyrosine; by autocatalysis.

The protein belongs to the protein kinase superfamily. Tyr protein kinase family. Fes/fps subfamily.

The catalysed reaction is L-tyrosyl-[protein] + ATP = O-phospho-L-tyrosyl-[protein] + ADP + H(+). The chain is Tyrosine-protein kinase transforming protein Fps (V-FPS) from Gallus gallus (Chicken).